The primary structure comprises 620 residues: Glutathione-regulated potassium-efflux system protein KefC (620 aa).

12 helical membrane passes run 4–24, 26–46, 54–74, 90–110, 114–134, 149–169, 178–198, 218–238, 270–290, 294–314, 327–347, and 359–379; these read HTLLQALIYLGSAALIVPIAV, LGLGSVLGYLIAGCIIGPWGL, SILHFAEIGVVLMLFVIGLEL, GALQMVVCGGLIGLFCMFLGL, VAELIGMTLALSSTAIAMQAM, FAVLLFQDIAAIPLVAMIPLL, LGAFALSALKVAGALALVVLL, VFSAVALFLVFGFGLLLEEVG, GLLLGLFFIGVGMSIDFGTLV, LRILLLLAGFLAIKIVMLWLV, WFAVLLGQGSKFAFVVFGAAQ, and ALTLAVALSMAATPIFLVLLT. The region spanning 399 to 518 is the RCK N-terminal domain; sequence QPRVIVAGFG…AGVAMPERET (120 aa). The interval 599–620 is disordered; sequence QGTAEGKHSGEAADEPEVKPSI.

This sequence belongs to the monovalent cation:proton antiporter 2 (CPA2) transporter (TC 2.A.37) family. KefC subfamily. Homodimer. Interacts with the regulatory subunit KefF.

The protein localises to the cell inner membrane. Its function is as follows. Pore-forming subunit of a potassium efflux system that confers protection against electrophiles. Catalyzes K(+)/H(+) antiport. This chain is Glutathione-regulated potassium-efflux system protein KefC, found in Salmonella choleraesuis (strain SC-B67).